Consider the following 328-residue polypeptide: Ribose-phosphate pyrophosphokinase (328 aa).

Residues 39–41 (DGE) and 98–99 (RQ) contribute to the ATP site. 2 residues coordinate Mg(2+): histidine 132 and aspartate 172. Residue lysine 195 is part of the active site. D-ribose 5-phosphate is bound by residues arginine 197, aspartate 221, and 225–229 (DTGGT).

This sequence belongs to the ribose-phosphate pyrophosphokinase family. Class I subfamily. In terms of assembly, homohexamer. Mg(2+) serves as cofactor.

It localises to the cytoplasm. The catalysed reaction is D-ribose 5-phosphate + ATP = 5-phospho-alpha-D-ribose 1-diphosphate + AMP + H(+). Its pathway is metabolic intermediate biosynthesis; 5-phospho-alpha-D-ribose 1-diphosphate biosynthesis; 5-phospho-alpha-D-ribose 1-diphosphate from D-ribose 5-phosphate (route I): step 1/1. In terms of biological role, involved in the biosynthesis of the central metabolite phospho-alpha-D-ribosyl-1-pyrophosphate (PRPP) via the transfer of pyrophosphoryl group from ATP to 1-hydroxyl of ribose-5-phosphate (Rib-5-P). This Mycoplasma pneumoniae (strain ATCC 29342 / M129 / Subtype 1) (Mycoplasmoides pneumoniae) protein is Ribose-phosphate pyrophosphokinase.